A 314-amino-acid polypeptide reads, in one-letter code: Porphobilinogen deaminase (314 aa).

An S-(dipyrrolylmethanemethyl)cysteine modification is found at Cys-249.

Belongs to the HMBS family. As to quaternary structure, monomer. It depends on dipyrromethane as a cofactor.

It catalyses the reaction 4 porphobilinogen + H2O = hydroxymethylbilane + 4 NH4(+). Its pathway is porphyrin-containing compound metabolism; protoporphyrin-IX biosynthesis; coproporphyrinogen-III from 5-aminolevulinate: step 2/4. Functionally, tetrapolymerization of the monopyrrole PBG into the hydroxymethylbilane pre-uroporphyrinogen in several discrete steps. The protein is Porphobilinogen deaminase of Brucella abortus (strain S19).